A 155-amino-acid chain; its full sequence is Large ribosomal subunit protein uL15 (155 aa).

A disordered region spans residues Met-1–Lys-63. Gly residues-rich tracts occupy residues Arg-21 to Ser-31 and Ser-42 to Gly-52.

The protein belongs to the universal ribosomal protein uL15 family. In terms of assembly, part of the 50S ribosomal subunit.

Its function is as follows. Binds to the 23S rRNA. This Symbiobacterium thermophilum (strain DSM 24528 / JCM 14929 / IAM 14863 / T) protein is Large ribosomal subunit protein uL15.